The following is a 250-amino-acid chain: UPF0758 protein RPB_0700 (250 aa).

The tract at residues 1–27 (MVDPISNAAPPMPADSSERLDPPGFAE) is disordered. The MPN domain maps to 128 to 250 (VLSSWSAVID…HASLKGLKLF (123 aa)). Positions 199, 201, and 212 each coordinate Zn(2+). Residues 199-212 (HNHPSGDPTPSQAD) carry the JAMM motif motif.

This sequence belongs to the UPF0758 family.

This Rhodopseudomonas palustris (strain HaA2) protein is UPF0758 protein RPB_0700.